Consider the following 170-residue polypeptide: Adenine phosphoribosyltransferase (170 aa).

The protein belongs to the purine/pyrimidine phosphoribosyltransferase family. As to quaternary structure, homodimer.

Its subcellular location is the cytoplasm. The enzyme catalyses AMP + diphosphate = 5-phospho-alpha-D-ribose 1-diphosphate + adenine. Its pathway is purine metabolism; AMP biosynthesis via salvage pathway; AMP from adenine: step 1/1. Functionally, catalyzes a salvage reaction resulting in the formation of AMP, that is energically less costly than de novo synthesis. In Clostridioides difficile (strain 630) (Peptoclostridium difficile), this protein is Adenine phosphoribosyltransferase.